We begin with the raw amino-acid sequence, 150 residues long: UPF0735 ACT domain-containing protein Helmi_18680 (150 aa).

In terms of domain architecture, ACT spans 72 to 147 (SVSLLLEHHP…GVRSAQLVGS (76 aa)).

Belongs to the UPF0735 family.

In Heliobacterium modesticaldum (strain ATCC 51547 / Ice1), this protein is UPF0735 ACT domain-containing protein Helmi_18680.